Here is a 315-residue protein sequence, read N- to C-terminus: Endolytic peptidoglycan transglycosylase RlpA (315 aa).

A signal peptide spans 1 to 19; that stretch reads MGLALEKVCFLGVIFLISA. Cysteine 20 carries the N-palmitoyl cysteine lipid modification. The S-diacylglycerol cysteine moiety is linked to residue cysteine 20. The segment covering 68-79 has biased composition (basic and acidic residues); sequence SDSQDSNTKDQP. A disordered region spans residues 68 to 92; it reads SDSQDSNTKDQPLDNGMRDSSSIQR. The SPOR domain occupies 242–315; it reads SVSGGKFSLQ…YNQNAVLTRE (74 aa).

It belongs to the RlpA family.

The protein localises to the cell membrane. Functionally, lytic transglycosylase with a strong preference for naked glycan strands that lack stem peptides. This is Endolytic peptidoglycan transglycosylase RlpA from Helicobacter pylori (strain ATCC 700392 / 26695) (Campylobacter pylori).